Here is a 394-residue protein sequence, read N- to C-terminus: Lipid-A-disaccharide synthase (394 aa).

It belongs to the LpxB family.

The enzyme catalyses a lipid X + a UDP-2-N,3-O-bis[(3R)-3-hydroxyacyl]-alpha-D-glucosamine = a lipid A disaccharide + UDP + H(+). It functions in the pathway bacterial outer membrane biogenesis; LPS lipid A biosynthesis. Its function is as follows. Condensation of UDP-2,3-diacylglucosamine and 2,3-diacylglucosamine-1-phosphate to form lipid A disaccharide, a precursor of lipid A, a phosphorylated glycolipid that anchors the lipopolysaccharide to the outer membrane of the cell. The protein is Lipid-A-disaccharide synthase (lpxB) of Synechocystis sp. (strain ATCC 27184 / PCC 6803 / Kazusa).